We begin with the raw amino-acid sequence, 977 residues long: Phosphatidylinositol 4-kinase PIK1alpha (977 aa).

The PIK helical domain occupies 1–125; it reads MSADITETPN…QAVRNLITKI (125 aa). A disordered region spans residues 205-261; sequence MSADIPKGSHSDDETATSSSIKPSLSRSASVPRRNTKKTSLSFSSDESEAYTTDDDD. Residues 220–233 are compositionally biased toward polar residues; sequence ATSSSIKPSLSRSA. The span at 250–261 shows a compositional bias: acidic residues; it reads DESEAYTTDDDD. Positions 679–960 constitute a PI3K/PI4K catalytic domain; the sequence is EDWNTKKQRI…FLIGKSLGSM (282 aa). Residues 685-691 are G-loop; the sequence is KQRIKKS. The interval 826–834 is catalytic loop; sequence QIKDRHNGN. The interval 845–869 is activation loop; that stretch reads HIDFGFLLSNSPGSVGFEAAPFKLT.

Belongs to the PI3/PI4-kinase family. Type III PI4K subfamily.

It is found in the nucleus. It catalyses the reaction a 1,2-diacyl-sn-glycero-3-phospho-(1D-myo-inositol) + ATP = a 1,2-diacyl-sn-glycero-3-phospho-(1D-myo-inositol 4-phosphate) + ADP + H(+). In terms of biological role, acts on phosphatidylinositol (PI) in the first committed step in the production of the second messenger inositol 1,4,5,-trisphosphate. The protein is Phosphatidylinositol 4-kinase PIK1alpha (PIKALPHA) of Candida albicans (strain SC5314 / ATCC MYA-2876) (Yeast).